A 516-amino-acid chain; its full sequence is Polyprenol-phosphate-mannose--protein mannosyltransferase (516 aa).

Helical transmembrane passes span 113 to 133 (YNGLGWRFSGAVCGVIIVMLV), 143 to 163 (STLVGAIAGLLIIADGVSFVS), 166 to 186 (TALLDVFLVMFAVAAFACLMV), 234 to 254 (WSGLYFVLFFGVMTLVFDAIA), 275 to 295 (AAYVFGLIPFAVYLASYAPWF), 384 to 404 (VMLVGTPAMWFIAVPVLGWAL), 413 to 433 (WRYGAVLVGYMAGFLPWFADI), 437 to 457 (MYFFYATVMAPFLVLAIALIL), and 473 to 493 (LGLLTVCFYVALVITNFAWMY).

Belongs to the glycosyltransferase 39 family.

It is found in the cell membrane. It participates in protein modification; protein glycosylation. In terms of biological role, protein O-mannosyltransferase that catalyzes the transfer of a single mannose residue from a polyprenol phospho-mannosyl lipidic donor to the hydroxyl group of selected serine and threonine residues in acceptor proteins. The polypeptide is Polyprenol-phosphate-mannose--protein mannosyltransferase (Mycolicibacterium smegmatis (strain ATCC 700084 / mc(2)155) (Mycobacterium smegmatis)).